Consider the following 180-residue polypeptide: Early nodulin-16 (180 aa).

The N-terminal stretch at 1–22 (MASSSPILLMIIFSMWLLISHS) is a signal peptide. The Phytocyanin domain maps to 25–129 (TDYLIGDSHN…GLKLAVVVQN (105 aa)). N-linked (GlcNAc...) asparagine glycosylation is present at asparagine 67. Cysteines 83 and 117 form a disulfide. A glycan (N-linked (GlcNAc...) asparagine) is linked at asparagine 152. Serine 154 carries GPI-anchor amidated serine lipidation. A propeptide spans 155–180 (GNKGGAAGLGFIMWLGVSLVMMMFLI) (removed in mature form).

The protein belongs to the early nodulin-like (ENODL) family. Expressed in developing nodules upon symbiosis with Sinorhizobium meliloti.

The protein localises to the symbiosome. It localises to the cell membrane. Its function is as follows. May act as a carbohydrate transporter. The protein is Early nodulin-16 of Medicago truncatula (Barrel medic).